The sequence spans 175 residues: Pathogenesis-related protein 1A1 (175 aa).

Positions 1–21 (MKSSIFVACFITFIIFHSSQA) are cleaved as a signal peptide. The region spanning 29–146 (LNAHNAARRR…SGWVFITCNY (118 aa)) is the SCP domain. Disulfide bonds link Cys-65–Cys-135, Cys-108–Cys-114, and Cys-130–Cys-144.

The protein belongs to the CRISP family.

Its function is as follows. Probably involved in the defense reaction of plants against pathogens. In Solanum lycopersicum (Tomato), this protein is Pathogenesis-related protein 1A1.